The chain runs to 450 residues: Bifunctional protein GlmU (450 aa).

Residues 1–229 (MRRHAIILAA…VEEIMGVNDR (229 aa)) form a pyrophosphorylase region. UDP-N-acetyl-alpha-D-glucosamine-binding positions include 8-11 (LAAG), Lys22, Gln72, and 77-78 (GT). Asp102 contacts Mg(2+). Residues Gly139, Glu154, and Asn227 each contribute to the UDP-N-acetyl-alpha-D-glucosamine site. Asn227 contributes to the Mg(2+) binding site. A linker region spans residues 230-250 (VMLSQAENAMQRRTNHYHMLN). The segment at 251–450 (GVTIIDPDST…RQTTKEGYRK (200 aa)) is N-acetyltransferase. UDP-N-acetyl-alpha-D-glucosamine-binding residues include Arg332 and Lys350. His362 (proton acceptor) is an active-site residue. UDP-N-acetyl-alpha-D-glucosamine contacts are provided by Tyr365 and Asn376. Acetyl-CoA-binding positions include 385-386 (NY), Ala422, and Arg439.

This sequence in the N-terminal section; belongs to the N-acetylglucosamine-1-phosphate uridyltransferase family. In the C-terminal section; belongs to the transferase hexapeptide repeat family. In terms of assembly, homotrimer. Mg(2+) serves as cofactor.

It localises to the cytoplasm. It carries out the reaction alpha-D-glucosamine 1-phosphate + acetyl-CoA = N-acetyl-alpha-D-glucosamine 1-phosphate + CoA + H(+). The catalysed reaction is N-acetyl-alpha-D-glucosamine 1-phosphate + UTP + H(+) = UDP-N-acetyl-alpha-D-glucosamine + diphosphate. It participates in nucleotide-sugar biosynthesis; UDP-N-acetyl-alpha-D-glucosamine biosynthesis; N-acetyl-alpha-D-glucosamine 1-phosphate from alpha-D-glucosamine 6-phosphate (route II): step 2/2. Its pathway is nucleotide-sugar biosynthesis; UDP-N-acetyl-alpha-D-glucosamine biosynthesis; UDP-N-acetyl-alpha-D-glucosamine from N-acetyl-alpha-D-glucosamine 1-phosphate: step 1/1. The protein operates within bacterial outer membrane biogenesis; LPS lipid A biosynthesis. Functionally, catalyzes the last two sequential reactions in the de novo biosynthetic pathway for UDP-N-acetylglucosamine (UDP-GlcNAc). The C-terminal domain catalyzes the transfer of acetyl group from acetyl coenzyme A to glucosamine-1-phosphate (GlcN-1-P) to produce N-acetylglucosamine-1-phosphate (GlcNAc-1-P), which is converted into UDP-GlcNAc by the transfer of uridine 5-monophosphate (from uridine 5-triphosphate), a reaction catalyzed by the N-terminal domain. The sequence is that of Bifunctional protein GlmU from Staphylococcus aureus (strain MRSA252).